A 425-amino-acid chain; its full sequence is Dihydroorotase (425 aa).

Residues histidine 56 and histidine 58 each contribute to the Zn(2+) site. Residues 58-60 (HYR) and asparagine 90 contribute to the substrate site. Aspartate 148, histidine 175, and histidine 228 together coordinate Zn(2+). Substrate is bound at residue asparagine 274. A Zn(2+)-binding site is contributed by aspartate 301. Residue aspartate 301 is part of the active site. Substrate contacts are provided by residues histidine 305 and 319–320 (FG).

The protein belongs to the metallo-dependent hydrolases superfamily. DHOase family. Class I DHOase subfamily. Requires Zn(2+) as cofactor.

It carries out the reaction (S)-dihydroorotate + H2O = N-carbamoyl-L-aspartate + H(+). It participates in pyrimidine metabolism; UMP biosynthesis via de novo pathway; (S)-dihydroorotate from bicarbonate: step 3/3. In terms of biological role, catalyzes the reversible cyclization of carbamoyl aspartate to dihydroorotate. This chain is Dihydroorotase, found in Lactobacillus helveticus (strain DPC 4571).